A 473-amino-acid chain; its full sequence is Photosystem II CP43 reaction center protein (473 aa).

Residues 1–14 (MKTLYSPRRYYPVE) constitute a propeptide that is removed on maturation. At Thr-15 the chain carries N-acetylthreonine. A Phosphothreonine modification is found at Thr-15. The next 5 membrane-spanning stretches (helical) occupy residues 69-93 (LFEVAHFVPEKPMYEQGLILLPHLA), 134-155 (IIGPETLEESFPFFGYVWKDKN), 178-200 (KAVWFGGVYDTWAPGGGDVRVIT), 255-275 (KPFAWARRAFVWSGEAYLSYS), and 291-312 (WFNNTAYPSEFYGPTGPEASQA). Residue Glu-367 participates in [CaMn4O5] cluster binding. The helical transmembrane segment at 447-471 (RARAAAAGFEKGIERETEPVLFMSP) threads the bilayer.

This sequence belongs to the PsbB/PsbC family. PsbC subfamily. As to quaternary structure, PSII is composed of 1 copy each of membrane proteins PsbA, PsbB, PsbC, PsbD, PsbE, PsbF, PsbH, PsbI, PsbJ, PsbK, PsbL, PsbM, PsbT, PsbX, PsbY, PsbZ, Psb30/Ycf12, at least 3 peripheral proteins of the oxygen-evolving complex and a large number of cofactors. It forms dimeric complexes. The cofactor is Binds multiple chlorophylls and provides some of the ligands for the Ca-4Mn-5O cluster of the oxygen-evolving complex. It may also provide a ligand for a Cl- that is required for oxygen evolution. PSII binds additional chlorophylls, carotenoids and specific lipids..

It is found in the plastid. The protein localises to the chloroplast thylakoid membrane. Functionally, one of the components of the core complex of photosystem II (PSII). It binds chlorophyll and helps catalyze the primary light-induced photochemical processes of PSII. PSII is a light-driven water:plastoquinone oxidoreductase, using light energy to abstract electrons from H(2)O, generating O(2) and a proton gradient subsequently used for ATP formation. The sequence is that of Photosystem II CP43 reaction center protein from Chaetosphaeridium globosum (Charophycean green alga).